A 210-amino-acid chain; its full sequence is ATP-dependent Clp protease proteolytic subunit (210 aa).

Ser-107 (nucleophile) is an active-site residue. The active site involves His-132.

It belongs to the peptidase S14 family. In terms of assembly, fourteen ClpP subunits assemble into 2 heptameric rings which stack back to back to give a disk-like structure with a central cavity, resembling the structure of eukaryotic proteasomes.

The protein resides in the cytoplasm. It carries out the reaction Hydrolysis of proteins to small peptides in the presence of ATP and magnesium. alpha-casein is the usual test substrate. In the absence of ATP, only oligopeptides shorter than five residues are hydrolyzed (such as succinyl-Leu-Tyr-|-NHMec, and Leu-Tyr-Leu-|-Tyr-Trp, in which cleavage of the -Tyr-|-Leu- and -Tyr-|-Trp bonds also occurs).. Cleaves peptides in various proteins in a process that requires ATP hydrolysis. Has a chymotrypsin-like activity. Plays a major role in the degradation of misfolded proteins. The protein is ATP-dependent Clp protease proteolytic subunit of Azorhizobium caulinodans (strain ATCC 43989 / DSM 5975 / JCM 20966 / LMG 6465 / NBRC 14845 / NCIMB 13405 / ORS 571).